We begin with the raw amino-acid sequence, 706 residues long: Choline transporter-like protein 2 (706 aa).

Topologically, residues 1–33 (MGKEQQLYYGKHGTPQKYDPAFRGPIYNRGCTD) are cytoplasmic. Thr-14 carries the post-translational modification Phosphothreonine. The helical transmembrane segment at 34-54 (IICCVFLFLAIVGYVAVGIIA) threads the bilayer. Residues 55-232 (WTHGDPRKVI…RIFEDYTVSW (178 aa)) are Extracellular-facing. Residues Asn-187 and Asn-200 are each glycosylated (N-linked (GlcNAc...) asparagine). A helical transmembrane segment spans residues 233-253 (YWIIIGLIIAMVLSLLFIILL). Residues 254–256 (RFL) are Cytoplasmic-facing. Residues 257–277 (AGIMVWVMIVMVILVLGYGIL) form a helical membrane-spanning segment. Over 278–315 (HCYMEYARLRGEAGSDVSLVDLGFQTDFRVYLHLRQTW) the chain is Extracellular. Residues 316–336 (VAFMIILSIVEVIIILLLIFL) form a helical membrane-spanning segment. Topologically, residues 337–364 (RKRILIAIALIKEASRAVGYVMCSLLYP) are cytoplasmic. A helical transmembrane segment spans residues 365 to 385 (LVTFFLLCLCIAYWASTAIFL). Topologically, residues 386 to 457 (STSNEAVYKI…FNVFMFFWLA (72 aa)) are extracellular. 2 N-linked (GlcNAc...) asparagine glycosylation sites follow: Asn-397 and Asn-417. The helical transmembrane segment at 458 to 480 (NFVLALGQVTLAGAFASYYWAMN) threads the bilayer. The Cytoplasmic portion of the chain corresponds to 481-504 (KPDDLPAFPLFSAFGRALRYHTGS). A helical transmembrane segment spans residues 505-525 (LAFGSLLLAIVQVIRVILEYL). The Extracellular segment spans residues 526-563 (DQRLKAAENKFAKFLMSCLKCCFWCLEKFIKFLNRNAY). Residues 564–584 (IMIAIYGTNFCTSARNAFFLL) form a helical membrane-spanning segment. The Cytoplasmic segment spans residues 585-599 (MRNIIRVAVLDKVTD). A helical transmembrane segment spans residues 600–620 (FLFLLGKLLIVGSVGILAFFF). Topologically, residues 621–638 (FTHRIRIVQDTAPSLNYY) are extracellular. A helical membrane pass occupies residues 639 to 659 (WVPVVTVVIGSYLIAHGFFSV). The Cytoplasmic segment spans residues 660–706 (YGMCVDTLFLCFLEDLERNDGTPERPYFMSLTLKKILNKTNKRQAEA).

The protein belongs to the CTL (choline transporter-like) family. In terms of assembly, interacts with COCH. In terms of processing, N-glycosylated.

It localises to the cell membrane. Its subcellular location is the mitochondrion outer membrane. It catalyses the reaction choline(out) + n H(+)(in) = choline(in) + n H(+)(out). The enzyme catalyses ethanolamine(out) + n H(+)(in) = ethanolamine(in) + n H(+)(out). Functionally, choline/H+ antiporter, mainly in mitochodria. Also acts as a low-affinity ethanolamine/H+ antiporter, regulating the supply of extracellular ethanolamine (Etn) for the CDP-Etn pathway, redistribute intracellular Etn and balance the CDP-Cho and CDP-Etn arms of the Kennedy pathway. This Bos taurus (Bovine) protein is Choline transporter-like protein 2 (SLC44A2).